Consider the following 206-residue polypeptide: Adenylate kinase (206 aa).

Residues 1-21 (MSQPKILLLGAPGAGKGTQSS) form a disordered region. Position 13–18 (13–18 (GAGKGT)) interacts with ATP. The NMP stretch occupies residues 33 to 61 (TTGDALRANKDMETEHGTPREFMEAGELV). AMP contacts are provided by residues Thr34, Arg39, 59–61 (ELV), 84–87 (GYPR), and Gln91. The segment at 120-153 (GRRMDPETGDIYHTEFNMPDDEEVRERLVQRDDD) is LID. ATP is bound by residues Arg121 and 130 to 131 (IY). Residues Arg150 and Arg161 each contribute to the AMP site. Ala189 contacts ATP.

This sequence belongs to the adenylate kinase family. As to quaternary structure, monomer.

The protein resides in the cytoplasm. The enzyme catalyses AMP + ATP = 2 ADP. It participates in purine metabolism; AMP biosynthesis via salvage pathway; AMP from ADP: step 1/1. Functionally, catalyzes the reversible transfer of the terminal phosphate group between ATP and AMP. Plays an important role in cellular energy homeostasis and in adenine nucleotide metabolism. This chain is Adenylate kinase, found in Natronomonas pharaonis (strain ATCC 35678 / DSM 2160 / CIP 103997 / JCM 8858 / NBRC 14720 / NCIMB 2260 / Gabara) (Halobacterium pharaonis).